Here is a 313-residue protein sequence, read N- to C-terminus: Ribosomal RNA small subunit methyltransferase H (313 aa).

S-adenosyl-L-methionine is bound by residues 35–37 (GGH), Asp55, Phe79, Asp101, and Gln108.

The protein belongs to the methyltransferase superfamily. RsmH family.

It is found in the cytoplasm. The catalysed reaction is cytidine(1402) in 16S rRNA + S-adenosyl-L-methionine = N(4)-methylcytidine(1402) in 16S rRNA + S-adenosyl-L-homocysteine + H(+). Specifically methylates the N4 position of cytidine in position 1402 (C1402) of 16S rRNA. The polypeptide is Ribosomal RNA small subunit methyltransferase H (Salmonella arizonae (strain ATCC BAA-731 / CDC346-86 / RSK2980)).